We begin with the raw amino-acid sequence, 931 residues long: Neuropilin-2 (931 aa).

A signal peptide (or 22) is located at residues 1-20 (MDMFPLTWVFLALYFSRHQV). At 21 to 864 (RGQPDPPCGG…EKSWLYTLDP (844 aa)) the chain is on the extracellular side. Intrachain disulfides connect C28–C55, C83–C105, and C149–C175. CUB domains follow at residues 28–142 (CGGR…YEIF) and 149–267 (CSKN…YYLV). N-linked (GlcNAc...) asparagine glycans are attached at residues N152 and N157. The Ca(2+) site is built by E197, D211, and D252. C208 and C230 form a disulfide bridge. Intrachain disulfides connect C277/C427 and C434/C592. 2 consecutive F5/8 type C domains span residues 277 to 427 (CNVP…LFGC) and 434 to 592 (CSNM…VLGC). A compositionally biased stretch (polar residues) spans 298–310 (TYSDGRWTPQQSR). The segment at 298–317 (TYSDGRWTPQQSRLHGDDNG) is disordered. Residues 601–622 (VETLGPTVKSEETTTPYPTEEE) are disordered. An N-linked (GlcNAc...) asparagine glycan is attached at N629. The 161-residue stretch at 642–802 (SGFNCNFDFL…TDVPLENCME (161 aa)) folds into the MAM domain. The N-linked (GlcNAc...) asparagine glycan is linked to N839. Residues 865–889 (ILITIIAMSSLGVLLGATCAGLLLY) form a helical membrane-spanning segment. Residues 890 to 931 (CTCSYSGLSSRSCTTLENYNFELYDGLKHKVKMNHQKCCSEA) lie on the Cytoplasmic side of the membrane.

Belongs to the neuropilin family. In terms of assembly, heterodimer with NRP1. Binds PLXNB1. As to quaternary structure, (Microbial infection) Interacts with human cytomegalovirus proteins gL, UL128, UL130 and UL131A.

The protein resides in the membrane. The protein localises to the secreted. In terms of biological role, high affinity receptor for semaphorins 3C, 3F, VEGF-165 and VEGF-145 isoforms of VEGF, and the PLGF-2 isoform of PGF. Its function is as follows. (Microbial infection) Acts as a receptor for human cytomegalovirus pentamer-dependent entry in epithelial and endothelial cells. This is Neuropilin-2 (NRP2) from Homo sapiens (Human).